A 668-amino-acid chain; its full sequence is CLK4-associating serine/arginine rich protein (668 aa).

Ser101 bears the Phosphoserine mark. Disordered stretches follow at residues 173–232 and 252–668; these read AEVE…GMAD and AKAL…HYRH. A compositionally biased stretch (acidic residues) spans 182–214; the sequence is PEEEESPAEEESNSDEDEVIPDIDVEVDVDELN. Positions 265–283 are enriched in basic residues; the sequence is RRSRRQRREFREKRLRGRK. Phosphoserine is present on residues Ser285 and Ser294. The span at 290–313 shows a compositional bias: basic and acidic residues; that stretch reads ARRDSPTYDPYKRSPSESSSESRS. Thr327 carries the post-translational modification Phosphothreonine. 2 positions are modified to phosphoserine: Ser331 and Ser335. Composition is skewed to low complexity over residues 340-353 and 378-395; these read AAAAAAAAASGAAP and SSSSASRTSSSRSSSRSS. Residues 396–435 are compositionally biased toward basic residues; it reads SRSRRGYYRSGRHARSRSRSWSRSRSRSRRYSRSRSRGRR. Positions 436-446 are enriched in basic and acidic residues; the sequence is HSDGGSRDGHR. Basic residues predominate over residues 475–486; it reads RGARGPRHHSSS. 2 stretches are compositionally biased toward low complexity: residues 487–510 and 518–527; these read HSRSSWSLSPSRSRSVTRSGSRSQ and QSHSQSQSHS. Ser541 bears the Phosphoserine mark. The residue at position 567 (Thr567) is a Phosphothreonine. A coiled-coil region spans residues 579-641; the sequence is ALNRQFKADK…ERQYSRQSRS (63 aa). Composition is skewed to basic and acidic residues over residues 584 to 611 and 619 to 635; these read FKADKKAAQEKMIQQEHERQEREDELRA and KERERREKEREEWERQY. Residues 636–645 show a composition bias toward low complexity; sequence SRQSRSPSPR. A compositionally biased stretch (basic residues) spans 653–668; sequence SRRRSRSRSRSPHYRH.

The protein belongs to the splicing factor SR family. As to quaternary structure, probably interacts with CLK4. Post-translationally, phosphorylated in vitro by CLK4. In terms of tissue distribution, highly expressed in brain. Expressed at intermediate level in lung and liver. In brain, it is expressed in the hippocampus, cerebellum and olfactory bulb.

It localises to the nucleus. It is found in the nucleoplasm. Functionally, probably functions as an alternative splicing regulator. May regulate the mRNA splicing of genes such as CLK1. May act by regulating members of the CLK kinase family. In Mus musculus (Mouse), this protein is CLK4-associating serine/arginine rich protein (Clasrp).